A 1018-amino-acid chain; its full sequence is UPF0182 protein Tfu_0541 (1018 aa).

7 consecutive transmembrane segments (helical) span residues 20–40, 64–84, 115–135, 171–191, 212–232, 254–274, and 287–307; these read LAPV…AANF, ALLF…SVYF, VFFW…ATAE, VIIG…VVVH, VHLS…YWLE, AVLY…VLFF, and VSLG…PAIV. Disordered stretches follow at residues 497–570 and 939–965; these read YPVD…QANN and GDEA…ASSD. Acidic residues-rich tracts occupy residues 542 to 560 and 939 to 959; these read QDQE…EEEQ and GDEA…EEEQ.

The protein belongs to the UPF0182 family.

It is found in the cell membrane. The sequence is that of UPF0182 protein Tfu_0541 from Thermobifida fusca (strain YX).